A 488-amino-acid polypeptide reads, in one-letter code: Ribulose bisphosphate carboxylase large chain (488 aa).

2 residues coordinate substrate: Asn-128 and Thr-178. The active-site Proton acceptor is Lys-180. Lys-182 provides a ligand contact to substrate. Mg(2+) is bound by residues Lys-206, Asp-208, and Glu-209. Lys-206 is modified (N6-carboxylysine). Catalysis depends on His-298, which acts as the Proton acceptor. Arg-299, His-331, and Ser-383 together coordinate substrate.

This sequence belongs to the RuBisCO large chain family. Type I subfamily. As to quaternary structure, heterohexadecamer of 8 large chains and 8 small chains. Mg(2+) is required as a cofactor.

The catalysed reaction is 2 (2R)-3-phosphoglycerate + 2 H(+) = D-ribulose 1,5-bisphosphate + CO2 + H2O. It carries out the reaction D-ribulose 1,5-bisphosphate + O2 = 2-phosphoglycolate + (2R)-3-phosphoglycerate + 2 H(+). RuBisCO catalyzes two reactions: the carboxylation of D-ribulose 1,5-bisphosphate, the primary event in carbon dioxide fixation, as well as the oxidative fragmentation of the pentose substrate. Both reactions occur simultaneously and in competition at the same active site. This chain is Ribulose bisphosphate carboxylase large chain, found in Xanthobacter autotrophicus (strain ATCC BAA-1158 / Py2).